Reading from the N-terminus, the 493-residue chain is Kelch-like protein 42 (493 aa).

The 73-residue stretch at 5 to 77 folds into the BTB domain; that stretch reads EMVQIRLEDR…INAGGAREGW (73 aa). 6 Kelch repeats span residues 183–241, 242–289, 291–332, 334–379, 381–436, and 438–487; these read VLVA…ILDN, YLFI…AVNS, LYAI…ECKG, IYVI…SVEE, IYIV…ALHN, and GIYI…SLYL.

As to quaternary structure, component of the BCR(KLHL42) E3 ubiquitin ligase complex, at least composed of CUL3 and KLHL42. Interacts (via the BTB domain) with CUL3. Interacts (via the kelch domains) with KATNA1.

The protein localises to the cytoplasm. The protein resides in the cytoskeleton. Its subcellular location is the spindle. Its pathway is protein modification; protein ubiquitination. Functionally, substrate-specific adapter of a BCR (BTB-CUL3-RBX1) E3 ubiquitin-protein ligase complex required for mitotic progression and cytokinesis. The BCR(KLHL42) E3 ubiquitin ligase complex mediates the ubiquitination and subsequent degradation of KATNA1. Involved in microtubule dynamics throughout mitosis. This is Kelch-like protein 42 (Klhl42) from Mus musculus (Mouse).